A 1325-amino-acid chain; its full sequence is MGTASSLVSPTGGEVIEDTYGAGGGEACEIPVEVKPKARLLRSSFRRGAGAGPGSLPRAAGGGGLLGASFKSTGSSVPELEYAAAEFERLKKEYEIFRVSKNQELLSMGRREAKLDTENKRLRAELQALQKTYQKILREKEGALEAKYQAMERAVTFEHDRDRVKRQFKIFRETKENEIQDLLRAKRELESKLQRLQAQGIQVFDPGESDSDDNCTDVTAAGTQCEYWASRALGSEHSIGSMIQLPQPFRGPEFAHSSIDVEGPFANINRDDWDAAVAGLLQATPLFSHSLWSHPVRCYLIYTDETQPEMELFLKDHSPKLKRMCETMGYFFLAVYFPLDVENQYLTVRKWEIEKSSLVILFLHSTLPSFLLEDCEEAFLQNPEGKPGLIYHRLEDGKVTCDSVQQFLDQVSNLGKTTKAKIIEHSGDPAEGVCKIYVGVEKIIKQDILGLENTDVEEKDGGREDSTPEEDDFGDVLWDIHDEQEQMEAFQQTSSSAHELGFEKYYQRLDDLVVAPAPIPPLLVSGGPGSGKSLLLSKWIQLQQKHFPNTLILSHFVGRPMSTSSESSLIIKRLTLKLMQHFWAVSALTLDPAKLLEEFPHWLEKLSARHQGSIIIIIDSIDQVQQVEKHMKWLIDPLPVNVRVIVSVNVETCPTAWRLWPTLHLDPLSPKDAISIITAECYSMDVRLSREQEKMLEQHCRPATTRHALYVTLFSKMMACAGRGGNVAETLHQCLQCQDTVSLYKLVLHHVRESMPSDRDKEWMTQILCLINVSHNGVSESELMELYPEMSWLSLTSIVHSLHKMHLLTYSCGLLRFQHLQAWETVRLQYLEDPALVSSYREKLISYFASQLSQDRVTWRSADELPWLFQQQGSKQKLHSCLLNLLVAQNLYKRGHFAELLSYWQFVGKDKGAMATEYFESLKQYENSEGEENMLCLADLYETLGRFLKDLGLLSQAVVPLQRSLEIRETALDPDHPRVAQSLHQLAGVYVQWKKFGDAEQLYKQALEISENAYGADHPHAARELEALATLYHKQNKYEQAEHFRKKSVIIRQQATRRKGSLYGFALLRRRALQLEELTLGKDKPENARTLNELGVLYFLQNNLETAEQFLKRSLEMRERVLGPDHPDCAQSLNNLAALCNEKKQYEKAEELYERALDIRRRALAPDHPSLAYTVKHLAILYKKTGKVDKAVPLYELAVEIRQKSFGPKHPSVATALVNLAVLHSQMKKHSEALPLYERALKIYEDSLGRMHPRVGETLKNLAVLSYEEGNFEKAAELYKRAMEIKEAETSLLGGKAPSRQSSSGDTFLFKTTHSPNVFLPQGQS.

A disordered region spans residues 1-20 (MGTASSLVSPTGGEVIEDTY). Gly-2 carries N-myristoyl glycine lipidation. Residues 107-203 (SMGRREAKLD…QRLQAQGIQV (97 aa)) are a coiled coil. 11 TPR repeats span residues 467–500 (TPEEDDFGDVLWDIHDEQEQMEAFQQTSSSAHEL), 881–914 (CLLNLLVAQNLYKRGHFAELLSYWQFVGKDKGAM), 916–937 (TEYFESLKQYENSEGEENMLCL), 938–971 (ADLYETLGRFLKDLGLLSQAVVPLQRSLEIRETA), 980–1013 (AQSLHQLAGVYVQWKKFGDAEQLYKQALEISENA), 1022–1055 (ARELEALATLYHKQNKYEQAEHFRKKSVIIRQQA), 1088–1121 (ARTLNELGVLYFLQNNLETAEQFLKRSLEMRERV), 1130–1163 (AQSLNNLAALCNEKKQYEKAEELYERALDIRRRA), 1172–1205 (AYTVKHLAILYKKTGKVDKAVPLYELAVEIRQKS), 1214–1247 (ATALVNLAVLHSQMKKHSEALPLYERALKIYEDS), and 1256–1289 (GETLKNLAVLSYEEGNFEKAAELYKRAMEIKEAE). The tract at residues 1293 to 1325 (LGGKAPSRQSSSGDTFLFKTTHSPNVFLPQGQS) is disordered. The segment covering 1299–1325 (SRQSSSGDTFLFKTTHSPNVFLPQGQS) has biased composition (polar residues).

In terms of assembly, interacts with NPHP1 and INVS/NPHP2. Interacts (when myristoylated) with UNC119 and UNC119B; interaction is required for localization to cilium. Interacts with CEP164. Component of a complex containing at least ANKS6, INVS, NEK8 and NPHP3. ANKS6 may organize complex assembly by linking INVS and NPHP3 to NEK8 and INVS may target the complex to the proximal ciliary axoneme.

It localises to the cell projection. It is found in the cilium. Functionally, required for normal ciliary development and function. Inhibits disheveled-1-induced canonical Wnt-signaling activity and may also play a role in the control of non-canonical Wnt signaling that regulates planar cell polarity. Probably acts as a molecular switch between different Wnt signaling pathways. Required for proper convergent extension cell movements. This chain is Nephrocystin-3 (Nphp3), found in Mus musculus (Mouse).